Consider the following 252-residue polypeptide: Phosphate import ATP-binding protein PstB 1 (252 aa).

An ABC transporter domain is found at 6–247 (LKVNDLSVYY…PQKQETEDYI (242 aa)). 38-45 (GPSGSGKS) is a binding site for ATP.

This sequence belongs to the ABC transporter superfamily. Phosphate importer (TC 3.A.1.7) family. The complex is composed of two ATP-binding proteins (PstB), two transmembrane proteins (PstC and PstA) and a solute-binding protein (PstS).

It localises to the cell membrane. It catalyses the reaction phosphate(out) + ATP + H2O = ADP + 2 phosphate(in) + H(+). Part of the ABC transporter complex PstSACB involved in phosphate import. Responsible for energy coupling to the transport system. This is Phosphate import ATP-binding protein PstB 1 from Streptococcus mutans serotype c (strain ATCC 700610 / UA159).